Consider the following 334-residue polypeptide: Holliday junction branch migration complex subunit RuvB (334 aa).

Residues 4–184 (ADRIISASPQ…FGIVQRLEFY (181 aa)) form a large ATPase domain (RuvB-L) region. ATP is bound by residues Ile23, Arg24, Gly65, Lys68, Thr69, Thr70, 131–133 (EDY), Arg174, Tyr184, and Arg221. A Mg(2+)-binding site is contributed by Thr69. A small ATPAse domain (RuvB-S) region spans residues 185–255 (NVDDLTSIVK…IAKQALVMLD (71 aa)). The segment at 258–334 (PQGFDFMDIK…YAHLGISLSE (77 aa)) is head domain (RuvB-H). Residues Arg294, Arg313, and Arg318 each contribute to the DNA site.

This sequence belongs to the RuvB family. In terms of assembly, homohexamer. Forms an RuvA(8)-RuvB(12)-Holliday junction (HJ) complex. HJ DNA is sandwiched between 2 RuvA tetramers; dsDNA enters through RuvA and exits via RuvB. An RuvB hexamer assembles on each DNA strand where it exits the tetramer. Each RuvB hexamer is contacted by two RuvA subunits (via domain III) on 2 adjacent RuvB subunits; this complex drives branch migration. In the full resolvosome a probable DNA-RuvA(4)-RuvB(12)-RuvC(2) complex forms which resolves the HJ.

The protein localises to the cytoplasm. It carries out the reaction ATP + H2O = ADP + phosphate + H(+). The RuvA-RuvB-RuvC complex processes Holliday junction (HJ) DNA during genetic recombination and DNA repair, while the RuvA-RuvB complex plays an important role in the rescue of blocked DNA replication forks via replication fork reversal (RFR). RuvA specifically binds to HJ cruciform DNA, conferring on it an open structure. The RuvB hexamer acts as an ATP-dependent pump, pulling dsDNA into and through the RuvAB complex. RuvB forms 2 homohexamers on either side of HJ DNA bound by 1 or 2 RuvA tetramers; 4 subunits per hexamer contact DNA at a time. Coordinated motions by a converter formed by DNA-disengaged RuvB subunits stimulates ATP hydrolysis and nucleotide exchange. Immobilization of the converter enables RuvB to convert the ATP-contained energy into a lever motion, pulling 2 nucleotides of DNA out of the RuvA tetramer per ATP hydrolyzed, thus driving DNA branch migration. The RuvB motors rotate together with the DNA substrate, which together with the progressing nucleotide cycle form the mechanistic basis for DNA recombination by continuous HJ branch migration. Branch migration allows RuvC to scan DNA until it finds its consensus sequence, where it cleaves and resolves cruciform DNA. This is Holliday junction branch migration complex subunit RuvB from Haemophilus ducreyi (strain 35000HP / ATCC 700724).